The chain runs to 191 residues: Reticulon-like protein B15 (191 aa).

The Reticulon domain maps to 13–191 (VADLCLWKDK…SKIPRAPKVE (179 aa)). The next 3 helical transmembrane spans lie at 23 to 43 (INSG…EFME), 47 to 67 (VPLL…WAKF), and 122 to 142 (VAII…YICL).

The protein localises to the endoplasmic reticulum membrane. This is Reticulon-like protein B15 (RTNLB15) from Arabidopsis thaliana (Mouse-ear cress).